Consider the following 253-residue polypeptide: uncharacterized protein (253 aa).

EamA domains are found at residues 1-97 (MFFM…IYSL) and 116-237 (FFWA…ISRL). 8 helical membrane-spanning segments follow: residues 2–22 (FFMALRFLIGGIILLPFAKQL), 28–48 (IFLLSIFTTLSTSFWAYGLLY), 53–73 (ESAVLSYTMPLIAIPLSTLIL), 80–100 (TEVIGILIGFSGVVIYSLNLG), 101–121 (IYFSLIGIVLTLINAFFWALF), 138–158 (AVQLLLGSLIFFTLSPIQFYF), 162–182 (INFLVDLLYVSVLGGGISFYL), and 214–234 (GVNVNIGMIEGIGVMFLGILI).

Belongs to the EamA transporter family.

It localises to the cell membrane. This is an uncharacterized protein from Acidianus ambivalens (Desulfurolobus ambivalens).